Consider the following 322-residue polypeptide: Sideroflexin-1 (322 aa).

Position 2 is an N-acetylserine (S2). Topologically, residues S2–T102 are mitochondrial matrix. Residues I103 to W120 traverse the membrane as a helical segment. Topologically, residues Q121 to E146 are mitochondrial intermembrane. Residues L147–A167 form a helical membrane-spanning segment. At L168–P174 the chain is on the mitochondrial matrix side. Residues L175–L195 form a helical membrane-spanning segment. The Mitochondrial intermembrane portion of the chain corresponds to M196–Q228. The helical transmembrane segment at V229–N249 threads the bilayer. The Mitochondrial matrix portion of the chain corresponds to T250–P266. The helical transmembrane segment at V267–F287 threads the bilayer. The Mitochondrial intermembrane portion of the chain corresponds to P288–L322.

It belongs to the sideroflexin family.

The protein localises to the mitochondrion inner membrane. The catalysed reaction is L-serine(in) = L-serine(out). It catalyses the reaction L-alanine(in) = L-alanine(out). The enzyme catalyses L-cysteine(in) = L-cysteine(out). Amino acid transporter importing serine, an essential substrate of the mitochondrial branch of the one-carbon pathway, into mitochondria. Mitochondrial serine is then converted to glycine and formate, which exits to the cytosol where it is used to generate the charged folates that serve as one-carbon donors. May also transport other amino acids including alanine and cysteine. This is Sideroflexin-1 (SFXN1) from Ovis aries (Sheep).